A 328-amino-acid chain; its full sequence is Tryptophan--tRNA ligase (328 aa).

Residues 11 to 13 (QPT) and 19 to 20 (GN) each bind ATP. The short motif at 12–20 (PTGNIHLGN) is the 'HIGH' region element. Asp-135 contacts L-tryptophan. ATP contacts are provided by residues 147–149 (GED), Ile-186, and 195–199 (KMSKS). Positions 195-199 (KMSKS) match the 'KMSKS' region motif.

Belongs to the class-I aminoacyl-tRNA synthetase family. In terms of assembly, homodimer.

It localises to the cytoplasm. It carries out the reaction tRNA(Trp) + L-tryptophan + ATP = L-tryptophyl-tRNA(Trp) + AMP + diphosphate + H(+). Functionally, catalyzes the attachment of tryptophan to tRNA(Trp). This Wolinella succinogenes (strain ATCC 29543 / DSM 1740 / CCUG 13145 / JCM 31913 / LMG 7466 / NCTC 11488 / FDC 602W) (Vibrio succinogenes) protein is Tryptophan--tRNA ligase.